The chain runs to 384 residues: Chaperone protein DnaJ (384 aa).

Residues 4–68 (DFYEILGVSR…EKRQMYDQMG (65 aa)) form the J domain. Disordered regions lie at residues 29–60 (REYH…DEEK) and 73–131 (EQAE…GQDL). Over residues 42 to 60 (EEKFKQAKKAKEVLTDEEK) the composition is skewed to basic and acidic residues. Residues 80 to 101 (GAGGGGGRGGMGGDPFGGGAGG) show a composition bias toward gly residues. A compositionally biased stretch (low complexity) spans 102–111 (FDMQDIFDQF). The span at 112 to 121 (FGGGGRGGRG) shows a compositional bias: gly residues. The CR-type zinc finger occupies 145-227 (GATKQLNVTR…CRGNGVVQND (83 aa)). 4 residues coordinate Zn(2+): Cys158, Cys161, Cys175, and Cys178. CXXCXGXG motif repeat units lie at residues 158–165 (CDDCDGAG), 175–182 (CPECNGQG), 201–208 (CRRCDGEG), and 215–222 (CSTCRGNG). The disordered stretch occupies residues 160–191 (DCDGAGHPPGADSETCPECNGQGQTTQVQQTP). The segment covering 180–190 (GQGQTTQVQQT) has biased composition (low complexity). Zn(2+)-binding residues include Cys201, Cys204, Cys215, and Cys218.

The protein belongs to the DnaJ family. In terms of assembly, homodimer. Requires Zn(2+) as cofactor.

The protein resides in the cytoplasm. Functionally, participates actively in the response to hyperosmotic and heat shock by preventing the aggregation of stress-denatured proteins and by disaggregating proteins, also in an autonomous, DnaK-independent fashion. Unfolded proteins bind initially to DnaJ; upon interaction with the DnaJ-bound protein, DnaK hydrolyzes its bound ATP, resulting in the formation of a stable complex. GrpE releases ADP from DnaK; ATP binding to DnaK triggers the release of the substrate protein, thus completing the reaction cycle. Several rounds of ATP-dependent interactions between DnaJ, DnaK and GrpE are required for fully efficient folding. Also involved, together with DnaK and GrpE, in the DNA replication of plasmids through activation of initiation proteins. The protein is Chaperone protein DnaJ of Haloarcula marismortui (strain ATCC 43049 / DSM 3752 / JCM 8966 / VKM B-1809) (Halobacterium marismortui).